We begin with the raw amino-acid sequence, 212 residues long: Phosphatidylserine decarboxylase proenzyme (212 aa).

Serine 182 serves as the catalytic Schiff-base intermediate with substrate; via pyruvic acid. Serine 182 carries the pyruvic acid (Ser); by autocatalysis modification.

The protein belongs to the phosphatidylserine decarboxylase family. PSD-A subfamily. As to quaternary structure, heterodimer of a large membrane-associated beta subunit and a small pyruvoyl-containing alpha subunit. Pyruvate serves as cofactor. Post-translationally, is synthesized initially as an inactive proenzyme. Formation of the active enzyme involves a self-maturation process in which the active site pyruvoyl group is generated from an internal serine residue via an autocatalytic post-translational modification. Two non-identical subunits are generated from the proenzyme in this reaction, and the pyruvate is formed at the N-terminus of the alpha chain, which is derived from the carboxyl end of the proenzyme. The post-translation cleavage follows an unusual pathway, termed non-hydrolytic serinolysis, in which the side chain hydroxyl group of the serine supplies its oxygen atom to form the C-terminus of the beta chain, while the remainder of the serine residue undergoes an oxidative deamination to produce ammonia and the pyruvoyl prosthetic group on the alpha chain.

It is found in the cell membrane. It catalyses the reaction a 1,2-diacyl-sn-glycero-3-phospho-L-serine + H(+) = a 1,2-diacyl-sn-glycero-3-phosphoethanolamine + CO2. The protein operates within phospholipid metabolism; phosphatidylethanolamine biosynthesis; phosphatidylethanolamine from CDP-diacylglycerol: step 2/2. Catalyzes the formation of phosphatidylethanolamine (PtdEtn) from phosphatidylserine (PtdSer). The polypeptide is Phosphatidylserine decarboxylase proenzyme (Pelodictyon phaeoclathratiforme (strain DSM 5477 / BU-1)).